The sequence spans 1140 residues: Envelopment polyprotein (1140 aa).

The first 17 residues, 1–17 (MVGWVCISLVVLATTTA), serve as a signal peptide directing secretion. The Lumenal segment spans residues 18–489 (GLTRNLYELK…VPGLHGWATT (472 aa)). 6 disulfides stabilise this stretch: Cys-30/Cys-155, Cys-64/Cys-161, Cys-113/Cys-132, Cys-137/Cys-142, Cys-179/Cys-189, and Cys-214/Cys-251. Asn-138 is a glycosylation site (N-linked (GlcNAc...) asparagine; by host). Residue Asn-351 is glycosylated (N-linked (GlcNAc...) asparagine; by host). Disulfide bonds link Cys-380/Cys-439, Cys-384/Cys-393, Cys-409/Cys-428, and Cys-456/Cys-479. Asn-403 carries N-linked (GlcNAc...) asparagine; by host glycosylation. Residues 490 to 510 (ALLITFCFGWLLIPTITMIIL) traverse the membrane as a helical segment. At 511–631 (KILRLLTFSC…LGVFRYKSRC (121 aa)) the chain is on the cytoplasmic side. The binding to the ribonucleoprotein stretch occupies residues 520–537 (CSHYSTESKFKAILERVK). CCHC-type zinc fingers lie at residues 549–569 (CDVC…KKSC) and 574–595 (CPYC…FSIC). 3 binding to the ribonucleoprotein regions span residues 592–609 (FSIC…KKSL), 596–607 (KLTNRFQENLKK), and 615–629 (KQGC…RYKS). Positions 611–638 (RPEVKQGCYRTLGVFRYKSRCYVGLVWG) are interaction with host TRAF3. The 24-residue stretch at 615–638 (KQGCYRTLGVFRYKSRCYVGLVWG) folds into the ITAM domain. Residues Tyr-619 and Tyr-632 each carry the phosphotyrosine; by host modification. Residues 619-622 (YRTL) carry the YxxL motif. Residues 632–652 (YVGLVWGVLLTTELIVWAASA) traverse the membrane as a helical segment. Residues 653–1108 (DTPLMESGWS…EWLLGILNGN (456 aa)) are Lumenal-facing. Disulfide bonds link Cys-739–Cys-774, Cys-743–Cys-781, Cys-755–Cys-888, Cys-769–Cys-899, Cys-784–Cys-907, Cys-810–Cys-819, Cys-827–Cys-836, and Cys-867–Cys-871. A fusion loop region spans residues 761–781 (YQYETSWGCNPPDCPGVGTGC). Residue Asn-931 is glycosylated (N-linked (GlcNAc...) asparagine; by host). 5 disulfide bridges follow: Cys-973/Cys-1003, Cys-996/Cys-1048, Cys-1013/Cys-1018, Cys-1049/Cys-1054, and Cys-1088/Cys-1092. The helical transmembrane segment at 1109-1129 (WVVVAVLIVILILSILLFSFF) threads the bilayer. Positions 1125–1140 (LFSFFCPIRGRKNKSN) are binding to the ribonucleoprotein. Residues 1130–1140 (CPIRGRKNKSN) lie on the Cytoplasmic side of the membrane.

Belongs to the hantavirus envelope glycoprotein family. In terms of assembly, homodimer. Homotetramer; forms heterotetrameric Gn-Gc spikes in the pre-fusion conformation. Interacts (via C-terminus) with the nucleoprotein. Interacts with host TUFM; this interaction contributes to the virus-induced degradation of mitochondria by autophagy, which leads to degradation of host MAVS and inhibition of type I interferon (IFN) responses. Interacts with host MAP1LC3B; this interaction contributes to the virus-induced degradation of mitochondria by autophagy, which leads to degradation of host MAVS and inhibition of type I interferon (IFN) responses. Interacts (via C-terminus) with host TRAF3 (via N-terminus); this interaction inhibits the formation of TRAF3-TBK1 complexes. Homodimer. Homotetramer; forms heterotetrameric Gn-Gc spikes in the pre-fusion conformation. Homotrimer; forms homotrimer in the post-fusion conformation at acidic pH. Interacts (via C-terminus) with the nucleoprotein. In terms of processing, envelope polyprotein precursor is quickly cleaved in vivo just after synthesis, presumably by host signal peptidase.

Its subcellular location is the virion membrane. It is found in the host cell surface. The protein localises to the host Golgi apparatus membrane. The protein resides in the host endoplasmic reticulum membrane. It localises to the host mitochondrion. Its function is as follows. Forms homotetramers with glycoprotein C at the surface of the virion. Attaches the virion to host cell receptors including integrin ITGAV/ITGB3. This attachment induces virion internalization predominantly through clathrin-dependent endocytosis. Mediates the assembly and budding of infectious virus particles through its interaction with the nucleocapsid protein and the viral genome. May dysregulate normal immune and endothelial cell responses through an ITAM motif. Translocates to mitochondria, binds to host TUFM and recruits MAP1LC3B. These interactions induce mitochondrial autophagy and therefore destruction of host MAVS leading to inhibition of type I interferon (IFN) responses. Concomitant breakdown of glycoprotein N is apparently prevented by the nucleoprotein that may inhibit Gn-stimulated autophagosome-lysosome fusion. Interacts with the viral genomic RNA. Inhibits the host RIG-I/TBK1 pathway by disrupting the formation of TBK1-TRAF3 complexes and downstream signaling responses required for IFN-beta transcription. Functionally, forms homotetramers with glycoprotein N at the surface of the virion. Attaches the virion to host cell receptors including integrin ITGAV/ITGB3. This attachment induces virion internalization predominantly through clathrin-dependent endocytosis. Class II fusion protein that promotes fusion of viral membrane with host endosomal membrane after endocytosis of the virion. In Homo sapiens (Human), this protein is Envelopment polyprotein (GP).